A 134-amino-acid chain; its full sequence is Large ribosomal subunit protein bL20 (134 aa).

This sequence belongs to the bacterial ribosomal protein bL20 family.

Its function is as follows. Binds directly to 23S ribosomal RNA and is necessary for the in vitro assembly process of the 50S ribosomal subunit. It is not involved in the protein synthesizing functions of that subunit. The polypeptide is Large ribosomal subunit protein bL20 (Sinorhizobium fredii (strain NBRC 101917 / NGR234)).